Reading from the N-terminus, the 1958-residue chain is MFTKKSHADVKKSTAKLQDSKKDSASRLRHLRMILDNVELEESKCLFETNYSHVYFILYDTFIQAEANLKQKVHKAHREELDGSLWLLEKILCLLPELLARRWQCHSLSRIMAKLLHLGNSPKLRREGVRYFLLWYQTLGENAPGYVHAMYADLIPGLIVPQKGVVGPDTEFSASDFLTHPNMKADGGMASVFHDNAFSHPVQSSEVVALLPPSSSEKSAPPDPRDGLEVLLNSMVHTAACLRWRDNRAQKDHRAFAFLLQRFMDVFLPVFSPNFDVSCSIYNPRLDLPVMRSINKKEEVMASCVVVLINWVSRFTHERLLSHRLDCTLHIEDVDQVRLHGYQQGLIVRDVLYVNRENINFVHEVYRQAFLLNFTSKPQIEAIRTAIAVYRDWMTGETPPPFLLEPNDDPPPPSNAGGTPRSQRLRTPSYVGAIAGSKDQLVVRAGRQNVLQVFVTNAANVFLVNTANLNICFPTRSRSYRSTPLEEQTEICKKVLNVYRTMVMNTEMDTRTWEQLLMVLLQVTSIVLHQNQHTLPSGTNKSATLGGILGSAIFQTLIVTWIRAHTKVPVNVLLWEKFLNVLQSLTHREELIIEWNKTIQTLTRVFSRYTYGINLLDLPLDRVAESRAEKRRRIGSVWQGSGSNSAANGGSAASAAISQNRQRESLAESSSSRSEETSSQVPLPNHPRPHHQHTQSQGGTGHGTRPIPLTPMLSRSYSEGSLASAARSSRIRRRRAATPKPKALQPSQLAENRINPQDLRRAMSLDSLARKGDAEETDSYQEGDNESGAGSRSPSPTASSGIEGGSIKDAQLQIDASLDDANSGSYGSGSNSGSISGRRCIILGGSAEGWHPDSTSIMWKRMLGALGDVNRIPKADLHAQVFMHLLEMTQNLIKIKQNQGISTDNQNTQPMPPLVPPIGIVAPWCYGSLSLDRSFKKGKLWALQLLCSLAIQGAVNMQQLPLFYHALHQLLTGEDRDLIYAILKHLEGPRLLSLLLPGHTLLLLDLVHASAILLTSLEVSRSTPRAEVAALLGSLLCYPSSLLTRSVLQPTPQKFELMECSDLQDHILNIVLRCARREPSAKARCIALSQLGQWLLMRLSQPLPASNSGRANLFQQAVPHHKDVHPKASSVYNPRIKEVLQVLLQALQFKHHTIAIVAVDSLKLCAERGRQLAAIERVPQLIITAICKALEIQSVTKPKDSDKVVLTSLMLCLGEFCMAIPAPIMLTPFNEQGDTLVLQVLRVLLQVASGAPRHERVKLTADDDFDMHIAHDDLQGDGRLPEATYQTSETIQKCITAIKLCAKAVSMHLVTHIGHFPMGIGASRLSSMVEEQDDIGNAAYGGQVETRRDSVELPSVVSAQNMQLFMLNSGLVASFIELPTLKLPGGGITAGLVTADKQVRVLMRDLNGKACWDASILYSEPRNAEEPPKTTPKIQHSQPLDSMATSMVTHTPSPRHTLRHRPAGVLPLAKDMAPDLDQLDDMLAYIGHTSPECVAPTVSQLNAPTASPLSGNQEAQAISVILNQRLLEQEFVTHSTQAPSPALRHASSNSSLQQPDQRSLHSTTASFDSLPTRTEMPFQYCRLLFSHLGLAGWERRSRTHLLQRSEKLMRELRNVDLQKCRETHKMAVIYVAAGQEDKGSILRNTSGSSTYEMFVSALGWEIDLETHNGFLGGLPRQGCGATAPYYATPFLEVVYHVATRMPSDSSEAMLLKTRHLGNDEVHIVWSEHNRDYRRDILPTEFCDVLIVVYPLRNGLFRVTVNRKPEVPWFGPLANESVVSGACLATLIRATAINASRTKRAALPLYQQFYEERNRSLDSVSSRYKESTTFEDFASRIYNPMPLSTLGTLRESNASSSAAPLASALLDHNRASVKGWVQASIDSGPIMGIAPSASAGSTAAMEAATGMSSASPRGPRKLGAPFKSVTKKHSLQHIAVGGGAGAGGDTPPESPTLPQRRFK.

Disordered stretches follow at residues 1-21, 400-424, and 635-804; these read MFTKKSHADVKKSTAKLQDSK, PPFLLEPNDDPPPPSNAGGTPRSQR, and GSVW…GIEG. A compositionally biased stretch (pro residues) spans 400-414; the sequence is PPFLLEPNDDPPPPS. Positions 640 to 656 are enriched in low complexity; that stretch reads GSGSNSAANGGSAASAA. Phosphoserine is present on residues S718, S764, and S767. A compositionally biased stretch (basic and acidic residues) spans 758–774; that stretch reads DLRRAMSLDSLARKGDA. Over residues 775-785 the composition is skewed to acidic residues; it reads EETDSYQEGDN. Phosphoserine occurs at positions 787, 791, 793, and 795. Over residues 788-800 the composition is skewed to polar residues; it reads GAGSRSPSPTASS. Y980 is modified (phosphotyrosine). Residues 1534 to 1568 are disordered; the sequence is HSTQAPSPALRHASSNSSLQQPDQRSLHSTTASFD. Positions 1546 to 1568 are enriched in polar residues; it reads ASSNSSLQQPDQRSLHSTTASFD. The residue at position 1551 (S1551) is a Phosphoserine. Positions 1612 to 1819 constitute a Rap-GAP domain; it reads LRNVDLQKCR…EERNRSLDSV (208 aa). Residues 1903–1958 are disordered; sequence ATGMSSASPRGPRKLGAPFKSVTKKHSLQHIAVGGGAGAGGDTPPESPTLPQRRFK. T1945 carries the post-translational modification Phosphothreonine. Phosphoserine is present on S1949.

The polypeptide is Probable Rho GTPase-activating protein CG5521 (Drosophila melanogaster (Fruit fly)).